The following is a 416-amino-acid chain: 4-hydroxy-3-methylbut-2-en-1-yl diphosphate synthase (flavodoxin) (416 aa).

Residues Cys304, Cys307, Cys350, and Glu357 each coordinate [4Fe-4S] cluster.

The protein belongs to the IspG family. It depends on [4Fe-4S] cluster as a cofactor.

It catalyses the reaction (2E)-4-hydroxy-3-methylbut-2-enyl diphosphate + oxidized [flavodoxin] + H2O + 2 H(+) = 2-C-methyl-D-erythritol 2,4-cyclic diphosphate + reduced [flavodoxin]. It participates in isoprenoid biosynthesis; isopentenyl diphosphate biosynthesis via DXP pathway; isopentenyl diphosphate from 1-deoxy-D-xylulose 5-phosphate: step 5/6. Converts 2C-methyl-D-erythritol 2,4-cyclodiphosphate (ME-2,4cPP) into 1-hydroxy-2-methyl-2-(E)-butenyl 4-diphosphate. This is 4-hydroxy-3-methylbut-2-en-1-yl diphosphate synthase (flavodoxin) from Rhizobium etli (strain CIAT 652).